A 191-amino-acid chain; its full sequence is Phosphopantetheine adenylyltransferase (191 aa).

Substrate is bound at residue Ser8. Residues 8 to 9 and His16 each bind ATP; that span reads SF. Residues Lys40, Thr72, and Arg86 each coordinate substrate. Residues 87–89, Glu97, and 122–128 each bind ATP; these read GLR and YSFLSSS.

The protein belongs to the bacterial CoaD family. In terms of assembly, homohexamer. Requires Mg(2+) as cofactor.

Its subcellular location is the cytoplasm. The enzyme catalyses (R)-4'-phosphopantetheine + ATP + H(+) = 3'-dephospho-CoA + diphosphate. Its pathway is cofactor biosynthesis; coenzyme A biosynthesis; CoA from (R)-pantothenate: step 4/5. Functionally, reversibly transfers an adenylyl group from ATP to 4'-phosphopantetheine, yielding dephospho-CoA (dPCoA) and pyrophosphate. The sequence is that of Phosphopantetheine adenylyltransferase from Nostoc sp. (strain PCC 7120 / SAG 25.82 / UTEX 2576).